Here is a 492-residue protein sequence, read N- to C-terminus: Transmembrane protein 104 homolog (492 aa).

At 1–18 (MQSNTDSSGTSGTYSQTV) the chain is on the cytoplasmic side. Residues 19-39 (GLLYVFNLIVGTGALALPKAF) form a helical membrane-spanning segment. The Extracellular portion of the chain corresponds to 40–45 (QSAGWL). A helical membrane pass occupies residues 46 to 66 (LSISLLTFSAFMSYVAATFVI). At 67–114 (EALSVANAVLSKKRRVEYDDVVVADGPSTFEIAKKVEVSEMASMFLSK) the chain is on the cytoplasmic side. The helical transmembrane segment at 115–135 (VSLVFSYFAIIIYLFGDLAIY) threads the bilayer. The Extracellular portion of the chain corresponds to 136 to 177 (STTVPKSAMNIVCSTINATIVKSSDPCHESWPEILTRMTVYR). The N-linked (GlcNAc...) asparagine glycan is linked to Asn-152. Residues 178-198 (FFVIVFVVVVCLPMVIAGITK) form a helical membrane-spanning segment. Over 199–210 (TRHIQIMTTLSR) the chain is Cytoplasmic. Residues 211–231 (WAAFILMISLATMQLSSQGAA) form a helical membrane-spanning segment. The Extracellular segment spans residues 232–238 (AHPPAYN). Residues 239–259 (FHGFGSLFGCAVYAFMCHHSI) traverse the membrane as a helical segment. The Cytoplasmic segment spans residues 260–275 (PSLITPMRTKENVFGK). A helical membrane pass occupies residues 276 to 296 (IAVVYGIVGVFYFTLSLTGAF). Residues 297 to 325 (AFEHVQDIYTLNFLHDDNTSLVYSIIDYF) are Extracellular-facing. A glycan (N-linked (GlcNAc...) asparagine) is linked at Asn-314. Residues 326 to 346 (LALFPIITLTSSYPIIALTLI) traverse the membrane as a helical segment. Over 347–391 (NNFKVVKDILCPKTGQENESLLEADNQVEDNDTDDEREARNGNPK) the chain is Cytoplasmic. Residues 367–382 (LLEADNQVEDNDTDDE) are compositionally biased toward acidic residues. Residues 367 to 387 (LLEADNQVEDNDTDDEREARN) are disordered. A helical membrane pass occupies residues 392–412 (TIFDVLVPTLVLALPTFLSLL). Topologically, residues 413-415 (TDD) are extracellular. The helical transmembrane segment at 416 to 436 (MLLLASITGSFPGVAVQFAIP) threads the bilayer. At 437–466 (CLLVTAARKHARSVLNFPVPRKNNSPFQSR) the chain is on the cytoplasmic side. The helical transmembrane segment at 467–487 (FWIMLISSWAGFSMIMVLLNL) threads the bilayer. Topologically, residues 488–492 (VGVKF) are extracellular.

Belongs to the TMEM104 family.

It localises to the membrane. The protein is Transmembrane protein 104 homolog of Caenorhabditis briggsae.